The primary structure comprises 287 residues: Bifunctional protein FolD (287 aa).

NADP(+) contacts are provided by residues 160–162, S189, and T230; that span reads GRS.

The protein belongs to the tetrahydrofolate dehydrogenase/cyclohydrolase family. In terms of assembly, homodimer.

It catalyses the reaction (6R)-5,10-methylene-5,6,7,8-tetrahydrofolate + NADP(+) = (6R)-5,10-methenyltetrahydrofolate + NADPH. The enzyme catalyses (6R)-5,10-methenyltetrahydrofolate + H2O = (6R)-10-formyltetrahydrofolate + H(+). It participates in one-carbon metabolism; tetrahydrofolate interconversion. Catalyzes the oxidation of 5,10-methylenetetrahydrofolate to 5,10-methenyltetrahydrofolate and then the hydrolysis of 5,10-methenyltetrahydrofolate to 10-formyltetrahydrofolate. This is Bifunctional protein FolD from Chlamydia muridarum (strain MoPn / Nigg).